Reading from the N-terminus, the 311-residue chain is Quinolinate synthase (311 aa).

The iminosuccinate site is built by histidine 25 and serine 42. Cysteine 87 is a binding site for [4Fe-4S] cluster. Iminosuccinate is bound by residues 113–115 and serine 130; that span reads YIN. Cysteine 175 contributes to the [4Fe-4S] cluster binding site. Iminosuccinate-binding positions include 201 to 203 and threonine 218; that span reads HPE. Cysteine 268 lines the [4Fe-4S] cluster pocket.

The protein belongs to the quinolinate synthase family. Type 2 subfamily. [4Fe-4S] cluster is required as a cofactor.

It is found in the cytoplasm. The catalysed reaction is iminosuccinate + dihydroxyacetone phosphate = quinolinate + phosphate + 2 H2O + H(+). The protein operates within cofactor biosynthesis; NAD(+) biosynthesis; quinolinate from iminoaspartate: step 1/1. In terms of biological role, catalyzes the condensation of iminoaspartate with dihydroxyacetone phosphate to form quinolinate. This chain is Quinolinate synthase, found in Saccharolobus solfataricus (strain ATCC 35092 / DSM 1617 / JCM 11322 / P2) (Sulfolobus solfataricus).